The sequence spans 333 residues: Lipoyl synthase (333 aa).

Residues M1–K29 form a disordered region. The [4Fe-4S] cluster site is built by C80, C85, C91, C106, C110, C113, and S320. The Radical SAM core domain occupies C91–T309.

The protein belongs to the radical SAM superfamily. Lipoyl synthase family. [4Fe-4S] cluster is required as a cofactor.

It localises to the cytoplasm. The enzyme catalyses [[Fe-S] cluster scaffold protein carrying a second [4Fe-4S](2+) cluster] + N(6)-octanoyl-L-lysyl-[protein] + 2 oxidized [2Fe-2S]-[ferredoxin] + 2 S-adenosyl-L-methionine + 4 H(+) = [[Fe-S] cluster scaffold protein] + N(6)-[(R)-dihydrolipoyl]-L-lysyl-[protein] + 4 Fe(3+) + 2 hydrogen sulfide + 2 5'-deoxyadenosine + 2 L-methionine + 2 reduced [2Fe-2S]-[ferredoxin]. Its pathway is protein modification; protein lipoylation via endogenous pathway; protein N(6)-(lipoyl)lysine from octanoyl-[acyl-carrier-protein]: step 2/2. Its function is as follows. Catalyzes the radical-mediated insertion of two sulfur atoms into the C-6 and C-8 positions of the octanoyl moiety bound to the lipoyl domains of lipoate-dependent enzymes, thereby converting the octanoylated domains into lipoylated derivatives. This chain is Lipoyl synthase, found in Ralstonia nicotianae (strain ATCC BAA-1114 / GMI1000) (Ralstonia solanacearum).